The primary structure comprises 198 residues: Na(+)-translocating NADH-quinone reductase subunit E (198 aa).

6 consecutive transmembrane segments (helical) span residues 11-31 (AVFVENMALAFFLGMCTFLAV), 35-55 (VSTAFGLGIAVTLVLGISVPV), 77-97 (FLNFITFIGVIAALVQILEMI), 110-130 (GIFLPLITVNCAIFGGVSFMV), 140-160 (VVYGFGSGTGWMLAIVAMAGI), and 176-196 (LGITFITTGLMALGFMSFSGV).

The protein belongs to the NqrDE/RnfAE family. Composed of six subunits; NqrA, NqrB, NqrC, NqrD, NqrE and NqrF.

It is found in the cell inner membrane. It carries out the reaction a ubiquinone + n Na(+)(in) + NADH + H(+) = a ubiquinol + n Na(+)(out) + NAD(+). Its function is as follows. NQR complex catalyzes the reduction of ubiquinone-1 to ubiquinol by two successive reactions, coupled with the transport of Na(+) ions from the cytoplasm to the periplasm. NqrA to NqrE are probably involved in the second step, the conversion of ubisemiquinone to ubiquinol. This Serratia proteamaculans (strain 568) protein is Na(+)-translocating NADH-quinone reductase subunit E.